The sequence spans 663 residues: Protein-arginine deiminase type-4 (663 aa).

Ca(2+)-binding residues include Asn-153, Asp-155, Asp-157, Asp-165, Asp-168, Glu-170, Asp-176, and Asp-179. A citrulline mark is found at Arg-205, Arg-212, and Arg-218. Residue Gln-349 coordinates Ca(2+). The active site involves Asp-350. Residues Glu-351, Glu-353, Asp-369, and Ser-370 each coordinate Ca(2+). Citrulline is present on Arg-372. Asn-373 serves as a coordination point for Ca(2+). Citrulline occurs at positions 374 and 383. A substrate-binding site is contributed by Arg-374. The Ca(2+) site is built by Asp-388, Phe-407, Leu-410, and Glu-411. Residues His-471 and Asp-473 contribute to the active site. Arg-639 is a binding site for substrate. Residue Cys-645 is part of the active site.

Belongs to the protein arginine deiminase family. Ca(2+) serves as cofactor. In terms of processing, autocitrullination at Arg-372 and Arg-374 inactivates the enzyme. In terms of tissue distribution, expressed in eosinophils and neutrophils, not expressed in peripheral monocytes or lymphocytes.

The protein resides in the cytoplasm. It localises to the nucleus. The protein localises to the cytoplasmic granule. The enzyme catalyses L-arginyl-[protein] + H2O = L-citrullyl-[protein] + NH4(+). Strongly Inhibited by F-amidine and N-alpha-benzoyl-N5-(2-chloro-1-iminoethyl)-L-ornithine amide (Cl-amidine). These inhibitors are however not specific to PADI4 and also inhibit other members of the family. Incorporation of a carboxylate ortho to the backbone amide of Cl-amidine results in inhibitors with increased specificity for PADI4: N-alpha-(2-carboxyl)benzoyl-N(5)-(2-fluoro-1-iminoethyl)-L-ornithine amide (o-F-amidine) and N-alpha-(2-carboxyl)benzoyl-N(5)-(2-chloro-1-iminoethyl)-L-ornithine amide (o-Cl-amidine). Strongly and specifically inhibited by Thr-Asp-F-amidine (TDFA); other members of the family are not inhibited. Its function is as follows. Catalyzes the citrullination/deimination of arginine residues of proteins such as histones, thereby playing a key role in histone code and regulation of stem cell maintenance. Citrullinates histone H1 at 'Arg-54' (to form H1R54ci), histone H3 at 'Arg-2', 'Arg-8', 'Arg-17' and/or 'Arg-26' (to form H3R2ci, H3R8ci, H3R17ci, H3R26ci, respectively) and histone H4 at 'Arg-3' (to form H4R3ci). Acts as a key regulator of stem cell maintenance by mediating citrullination of histone H1: citrullination of 'Arg-54' of histone H1 (H1R54ci) results in H1 displacement from chromatin and global chromatin decondensation, thereby promoting pluripotency and stem cell maintenance. Promotes profound chromatin decondensation during the innate immune response to infection in neutrophils by mediating formation of H1R54ci. Required for the formation of neutrophil extracellular traps (NETs); NETs are mainly composed of DNA fibers and are released by neutrophils to bind pathogens during inflammation. Citrullination of histone H3 prevents their methylation by CARM1 and HRMT1L2/PRMT1 and represses transcription. Citrullinates EP300/P300 at 'Arg-2142', which favors its interaction with NCOA2/GRIP1. This Homo sapiens (Human) protein is Protein-arginine deiminase type-4 (PADI4).